The sequence spans 117 residues: Large ribosomal subunit protein bL20 (117 aa).

It belongs to the bacterial ribosomal protein bL20 family.

Functionally, binds directly to 23S ribosomal RNA and is necessary for the in vitro assembly process of the 50S ribosomal subunit. It is not involved in the protein synthesizing functions of that subunit. The sequence is that of Large ribosomal subunit protein bL20 from Nitratidesulfovibrio vulgaris (strain DP4) (Desulfovibrio vulgaris).